The sequence spans 639 residues: Elongation factor 4 (639 aa).

A tr-type G domain is found at 39 to 221 (TMIRNFCIIA…EIVRRVPAPV (183 aa)). Residues 51 to 56 (DHGKST) and 168 to 171 (NKID) each bind GTP.

Belongs to the TRAFAC class translation factor GTPase superfamily. Classic translation factor GTPase family. LepA subfamily.

The protein localises to the cell membrane. The enzyme catalyses GTP + H2O = GDP + phosphate + H(+). Functionally, required for accurate and efficient protein synthesis under certain stress conditions. May act as a fidelity factor of the translation reaction, by catalyzing a one-codon backward translocation of tRNAs on improperly translocated ribosomes. Back-translocation proceeds from a post-translocation (POST) complex to a pre-translocation (PRE) complex, thus giving elongation factor G a second chance to translocate the tRNAs correctly. Binds to ribosomes in a GTP-dependent manner. In Frankia casuarinae (strain DSM 45818 / CECT 9043 / HFP020203 / CcI3), this protein is Elongation factor 4.